Reading from the N-terminus, the 1227-residue chain is Pre-mRNA-splicing factor ATP-dependent RNA helicase PRP16 (1227 aa).

Gly-2 is subject to N-acetylglycine. The residue at position 56 (Ser-56) is a Phosphoserine. The segment covering 60–89 (REREEKDDGEDKKKSKVSSYKDWEESKDDQ) has biased composition (basic and acidic residues). The segment at 60–320 (REREEKDDGE…ERQQWEDDQR (261 aa)) is disordered. Thr-117 is modified (phosphothreonine). Basic and acidic residues predominate over residues 128–201 (FWERSRQRER…SRRNEPESPR (74 aa)). A phosphoserine mark is found at Ser-199 and Ser-224. A compositionally biased stretch (polar residues) spans 222–239 (YGSSRRSQWESPSPTPSY). The span at 240 to 263 (RDSERSHRLSTRDRDRSVRGKYSD) shows a compositional bias: basic and acidic residues. Lys-260 carries the post-translational modification N6-acetyllysine. Positions 300-310 (GEEGISFDTEE) are enriched in acidic residues. Residues 311 to 320 (ERQQWEDDQR) are compositionally biased toward basic and acidic residues. Glycyl lysine isopeptide (Lys-Gly) (interchain with G-Cter in SUMO2) cross-links involve residues Lys-482, Lys-483, and Lys-504. One can recognise a Helicase ATP-binding domain in the interval 542 to 705 (LTIIRDNSIV…FGNVPIFHIP (164 aa)). ATP is bound at residue 555–562 (GETGSGKT). The short motif at 652-655 (DEAH) is the DEAH box element. One can recognise a Helicase C-terminal domain in the interval 727 to 902 (AVKQSLQVHL…NVVLLLKSLG (176 aa)). Residues 1155–1227 (GKSRQENRRR…PRRTPARFGL (73 aa)) form a disordered region. Composition is skewed to basic and acidic residues over residues 1157-1169 (SRQE…KEEA) and 1181-1194 (EQLR…EKRS). Residue Lys-1166 forms a Glycyl lysine isopeptide (Lys-Gly) (interchain with G-Cter in SUMO2) linkage. Ser-1194 is subject to Phosphoserine.

This sequence belongs to the DEAD box helicase family. DEAH subfamily. PRP16 sub-subfamily. In terms of assembly, identified in the spliceosome C complex.

The protein localises to the nucleus. The catalysed reaction is ATP + H2O = ADP + phosphate + H(+). Probable ATP-binding RNA helicase. Involved in pre-mRNA splicing as component of the spliceosome. In Homo sapiens (Human), this protein is Pre-mRNA-splicing factor ATP-dependent RNA helicase PRP16 (DHX38).